The sequence spans 239 residues: Ribonuclease P protein component 3 (239 aa).

This sequence belongs to the eukaryotic/archaeal RNase P protein component 3 family. In terms of assembly, consists of a catalytic RNA component and at least 4-5 protein subunits.

The protein resides in the cytoplasm. It carries out the reaction Endonucleolytic cleavage of RNA, removing 5'-extranucleotides from tRNA precursor.. Functionally, part of ribonuclease P, a protein complex that generates mature tRNA molecules by cleaving their 5'-ends. The sequence is that of Ribonuclease P protein component 3 from Methanosarcina mazei (strain ATCC BAA-159 / DSM 3647 / Goe1 / Go1 / JCM 11833 / OCM 88) (Methanosarcina frisia).